The primary structure comprises 477 residues: Endogenous retrovirus group V member 1 Env polyprotein (477 aa).

The signal sequence occupies residues 1 to 21 (MTEKFLFLYLSLLPMPLLSQA). At 22–321 (QWNENSLVSF…NTTQPRQKRA (300 aa)) the chain is on the extracellular side. The N-linked (GlcNAc...) asparagine glycan is linked to Asn-68. The chain crosses the membrane as a helical span at residues 322-342 (LGLILAGMGAAIGMIAPWGGF). At 343–477 (TYHDVTLRNL…LLSPLWPLSL (135 aa)) the chain is on the cytoplasmic side.

This sequence belongs to the gamma type-C retroviral envelope protein family. As to expression, expressed in placenta.

Its subcellular location is the membrane. This is Endogenous retrovirus group V member 1 Env polyprotein (ERVV-1) from Homo sapiens (Human).